We begin with the raw amino-acid sequence, 589 residues long: Transmembrane 9 superfamily member 1 (589 aa).

The signal sequence occupies residues Met1–Ala24. Residues Ser25–Trp222 are Lumenal-facing. A helical membrane pass occupies residues Phe223–Leu243. The Cytoplasmic portion of the chain corresponds to Met244–Ala293. Residues Val294 to Val314 form a helical membrane-spanning segment. Over Gly315–Arg321 the chain is Lumenal. The chain crosses the membrane as a helical span at residues Gly322–Val342. Topologically, residues Ser343 to Ser364 are cytoplasmic. The helical transmembrane segment at Leu365–Gly385 threads the bilayer. The Lumenal segment spans residues Ser386 to Met395. The helical transmembrane segment at Val396–Val416 threads the bilayer. Residues Gly417–Val448 are Cytoplasmic-facing. The helical transmembrane segment at Val449–Phe469 threads the bilayer. Over Thr470–Tyr481 the chain is Lumenal. A helical membrane pass occupies residues Gly482–Gly502. Residues Thr503–Ser518 are Cytoplasmic-facing. The helical transmembrane segment at Phe519–Val539 threads the bilayer. The Lumenal segment spans residues Lys540 to Ser550. The helical transmembrane segment at Phe551–Gly571 threads the bilayer. Over Tyr572 to Asp589 the chain is Cytoplasmic. Residues Phe578 to Tyr583 carry the Endoplasmic reticulum export signal motif. Residues Lys587–Asp589 carry the Golgi retention signal motif.

It belongs to the nonaspanin (TM9SF) (TC 9.A.2) family. Ubiquitous.

Its subcellular location is the endosome membrane. It localises to the golgi apparatus membrane. The chain is Transmembrane 9 superfamily member 1 from Arabidopsis thaliana (Mouse-ear cress).